The chain runs to 360 residues: MFESIQGLLDEHADLQIRLSDPAVHADQSLARKLGRRYAELSTIVEGYHQVQQLSDDLAAAKEMASEDSEFAAEVPVLEEQLAHAQEKLRRLLIPRDPDDGRDVILEVKAGEGGDESALFAADLVRMYSRYAESKGWKIEVISATESDLGGYKDIQIAVKGRSNDPAEGVFAALKFEGGVHRVQRVPVTESQGRIHTSAAGVLVFPEVDEPEEVEISQNDLKIDVYRSSGPGGQSVNTTDSAVRITHFPTGIVVAMQNEKSQLQNREAGMRVLRARILAHQQELIDAENSAVRKSQIRTMDRSERIRTYNFPENRIADHRTGYKSYNLDAVMNGDLGPVIQSAIEMDEQSRLDALSGSSE.

The residue at position 234 (Gln234) is an N5-methylglutamine.

This sequence belongs to the prokaryotic/mitochondrial release factor family. Post-translationally, methylated by PrmC. Methylation increases the termination efficiency of RF1.

Its subcellular location is the cytoplasm. Peptide chain release factor 1 directs the termination of translation in response to the peptide chain termination codons UAG and UAA. This is Peptide chain release factor 1 from Renibacterium salmoninarum (strain ATCC 33209 / DSM 20767 / JCM 11484 / NBRC 15589 / NCIMB 2235).